The primary structure comprises 104 residues: Guanidinium exporter (104 aa).

Position 1 (Met-1) is a topological domain, cytoplasmic. The helical transmembrane segment at 2-19 threads the bilayer; sequence AWIILVIAGLLEVIWAIG. Residues 20-28 lie on the Periplasmic side of the membrane; sequence LKYSHGFSR. A helical transmembrane segment spans residues 29–48; that stretch reads LTPSIITLVAMAASVFLLAY. At 49–54 the chain is on the cytoplasmic side; it reads AMKSLP. A helical membrane pass occupies residues 55-77; it reads AGTAYAVWTGIGAVGTAILGIVL. Residues 78–81 lie on the Periplasmic side of the membrane; that stretch reads LGES. The helical transmembrane segment at 82 to 100 threads the bilayer; sequence ASLARILSLGLILAGIIGL. Residues 101–104 are Cytoplasmic-facing; the sequence is KLAS.

Belongs to the drug/metabolite transporter (DMT) superfamily. Small multidrug resistance (SMR) (TC 2.A.7.1) family. Gdx/SugE subfamily.

Its subcellular location is the cell inner membrane. Its function is as follows. Guanidinium ion exporter. Couples guanidinium export to the proton motive force, exchanging one guanidinium ion for two protons. In Yersinia pestis, this protein is Guanidinium exporter.